Reading from the N-terminus, the 108-residue chain is Cytochrome c (108 aa).

The heme c site is built by C19, C22, H23, and M85.

Belongs to the cytochrome c family. Binds 1 heme c group covalently per subunit.

The protein resides in the mitochondrion intermembrane space. Functionally, electron carrier protein. The oxidized form of the cytochrome c heme group can accept an electron from the heme group of the cytochrome c1 subunit of cytochrome reductase. Cytochrome c then transfers this electron to the cytochrome oxidase complex, the final protein carrier in the mitochondrial electron-transport chain. This is Cytochrome c from Cochliobolus lunatus (Filamentous fungus).